The chain runs to 488 residues: (S)-canadine synthase CYP719A21 (488 aa).

Residues 6–26 (LWILTLISTILAVFAAVLIIF) traverse the membrane as a helical segment. Heme is bound at residue Cys432.

This sequence belongs to the cytochrome P450 family. It depends on heme as a cofactor.

The protein resides in the membrane. It carries out the reaction (S)-tetrahydrocolumbamine + reduced [NADPH--hemoprotein reductase] + O2 = (S)-canadine + oxidized [NADPH--hemoprotein reductase] + 2 H2O + H(+). The protein operates within alkaloid biosynthesis. Its function is as follows. Cytochrome P450 involved in the biosynthesis of the benzylisoquinoline alkaloid noscapine. Converts (S)-tetrahydrocolumbamine to (S)-canadine. This Papaver somniferum (Opium poppy) protein is (S)-canadine synthase CYP719A21.